The following is a 685-amino-acid chain: Sodium-dependent phosphate transporter 1 (685 aa).

The next 6 membrane-spanning stretches (helical) occupy residues 25-45 (FLWM…SVGA), 66-86 (ACIL…AKVS), 106-126 (LMAG…AASF), 162-182 (IVLS…LLFY), 201-221 (ALPI…MYSG), and 234-254 (GIIL…WFFV). Residues 482 to 492 (VEAEEQEEGSI) are compositionally biased toward acidic residues. The interval 482–513 (VEAEEQEEGSIEDVATDRKSSSSSLEERHDQD) is disordered. The segment covering 496-513 (ATDRKSSSSSLEERHDQD) has biased composition (basic and acidic residues). 4 helical membrane passes run 517–537 (VSLL…FAHG), 565–585 (ATPI…LWVW), 606–626 (FSIE…GLPI), and 656–676 (IFLA…AIMA).

The protein belongs to the inorganic phosphate transporter (PiT) (TC 2.A.20) family.

The protein resides in the cell membrane. The catalysed reaction is 2 Na(+)(out) + phosphate(out) = 2 Na(+)(in) + phosphate(in). Functionally, sodium-phosphate symporter which preferentially transports the monovalent form of phosphate with a stoichiometry of two sodium ions per phosphate ion. The chain is Sodium-dependent phosphate transporter 1 (slc20a1) from Xenopus tropicalis (Western clawed frog).